The sequence spans 393 residues: GDP-mannose:cellobiosyl-diphosphopolyprenol alpha-mannosyltransferase (393 aa).

The protein belongs to the glycosyltransferase group 1 family. Glycosyltransferase 4 subfamily.

The enzyme catalyses beta-D-Glc-(1-&gt;4)-alpha-D-Glc-di-trans,octa-cis-undecaprenyl diphosphate + GDP-alpha-D-mannose = alpha-D-Man-(1-&gt;3)-beta-D-Glc-(1-&gt;4)-alpha-D-Glc-1-di-trans,octa-cis-undecaprenyl diphosphate + GDP + H(+). In terms of biological role, involved in the biosynthesis of the exopolysaccharide acetan, a water-soluble polysaccharide involved in production of bacterial cellulose (BC). This is GDP-mannose:cellobiosyl-diphosphopolyprenol alpha-mannosyltransferase (aceC) from Komagataeibacter xylinus (Gluconacetobacter xylinus).